The sequence spans 379 residues: Dual-specificity RNA methyltransferase RlmN (379 aa).

E95 acts as the Proton acceptor in catalysis. The region spanning 101–345 (EETRGTLCVS…TTVRKTRGDD (245 aa)) is the Radical SAM core domain. C108 and C350 are joined by a disulfide. [4Fe-4S] cluster contacts are provided by C115, C119, and C122. S-adenosyl-L-methionine is bound by residues 176 to 177 (GE), S208, 230 to 232 (SLH), and N307. The active-site S-methylcysteine intermediate is C350.

Belongs to the radical SAM superfamily. RlmN family. [4Fe-4S] cluster is required as a cofactor.

The protein localises to the cytoplasm. It catalyses the reaction adenosine(2503) in 23S rRNA + 2 reduced [2Fe-2S]-[ferredoxin] + 2 S-adenosyl-L-methionine = 2-methyladenosine(2503) in 23S rRNA + 5'-deoxyadenosine + L-methionine + 2 oxidized [2Fe-2S]-[ferredoxin] + S-adenosyl-L-homocysteine. It carries out the reaction adenosine(37) in tRNA + 2 reduced [2Fe-2S]-[ferredoxin] + 2 S-adenosyl-L-methionine = 2-methyladenosine(37) in tRNA + 5'-deoxyadenosine + L-methionine + 2 oxidized [2Fe-2S]-[ferredoxin] + S-adenosyl-L-homocysteine. Its function is as follows. Specifically methylates position 2 of adenine 2503 in 23S rRNA and position 2 of adenine 37 in tRNAs. m2A2503 modification seems to play a crucial role in the proofreading step occurring at the peptidyl transferase center and thus would serve to optimize ribosomal fidelity. The chain is Dual-specificity RNA methyltransferase RlmN from Burkholderia cenocepacia (strain HI2424).